The primary structure comprises 275 residues: MAARMGSKVAAILAILSVLVVHGSCKGHPVNYNVSDASAYGSGWLPARATWYGAPTGAGPDDNGGACGFKNVNQYPFSSMTSCGNEPIFKDGKGCGSCYQIRCNKDPSCSGNIETVIITDMNYYPVARYHFDLSGTAFGAMAKPGLNDKLRHSGIIDIQFRRVPCNYPGLKINFHVEEGSNPVYFAVLVEYEDLDGDVVQVDLMESKSAYGGATGVWTPMRESWGSIWRLDSNHRLQAPFSLRIRSDSGKTLVANNVIPANWSPNSNYRSIVQFS.

Residues 1 to 25 (MAARMGSKVAAILAILSVLVVHGSC) form the signal peptide. Residue N33 is glycosylated (N-linked (GlcNAc...) asparagine). Positions 64 to 170 (GGACGFKNVN…RRVPCNYPGL (107 aa)) constitute an Expansin-like EG45 domain. Disulfide bonds link C67-C95, C98-C165, and C103-C109. In terms of domain architecture, Expansin-like CBD spans 183-270 (VYFAVLVEYE…NWSPNSNYRS (88 aa)).

Belongs to the expansin family. Expansin B subfamily. In terms of tissue distribution, expressed in internodes.

It is found in the secreted. The protein resides in the cell wall. The protein localises to the membrane. Functionally, may cause loosening and extension of plant cell walls by disrupting non-covalent bonding between cellulose microfibrils and matrix glucans. No enzymatic activity has been found. May be required for rapid internodal elongation in deepwater rice during submergence. This is Expansin-B6 (EXPB6) from Oryza sativa subsp. japonica (Rice).